The following is a 185-amino-acid chain: Large ribosomal subunit protein uL22 (185 aa).

The protein belongs to the universal ribosomal protein uL22 family.

The sequence is that of Large ribosomal subunit protein uL22 (RPL17) from Debaryomyces hansenii (strain ATCC 36239 / CBS 767 / BCRC 21394 / JCM 1990 / NBRC 0083 / IGC 2968) (Yeast).